Reading from the N-terminus, the 429-residue chain is Adenylosuccinate synthetase (429 aa).

GTP-binding positions include 13 to 19 (GDEGKGK) and 41 to 43 (GHT). The active-site Proton acceptor is Asp-14. Mg(2+)-binding residues include Asp-14 and Gly-41. Residues 14 to 17 (DEGK), 39 to 42 (NAGH), Thr-130, Arg-144, Gln-225, Thr-240, and Arg-304 each bind IMP. Residue His-42 is the Proton donor of the active site. 300–306 (ATTGRRR) provides a ligand contact to substrate. GTP-binding positions include Arg-306, 332 to 334 (KLD), and 417 to 419 (STG).

This sequence belongs to the adenylosuccinate synthetase family. In terms of assembly, homodimer. Requires Mg(2+) as cofactor.

The protein resides in the cytoplasm. The catalysed reaction is IMP + L-aspartate + GTP = N(6)-(1,2-dicarboxyethyl)-AMP + GDP + phosphate + 2 H(+). The protein operates within purine metabolism; AMP biosynthesis via de novo pathway; AMP from IMP: step 1/2. In terms of biological role, plays an important role in the de novo pathway of purine nucleotide biosynthesis. Catalyzes the first committed step in the biosynthesis of AMP from IMP. The polypeptide is Adenylosuccinate synthetase (Buchnera aphidicola subsp. Baizongia pistaciae (strain Bp)).